We begin with the raw amino-acid sequence, 286 residues long: UPF0761 membrane protein KPN78578_41360 (286 aa).

7 helical membrane passes run 44-64 (LLSL…FPMF), 74-94 (FIFA…IEQF), 104-124 (VGAF…DSAL), 140-160 (FAVY…SLAI), 183-203 (LFPL…VPTT), 210-230 (AVIG…AFAL), and 244-264 (VISV…IVLL).

It belongs to the UPF0761 family.

The protein resides in the cell inner membrane. In Klebsiella pneumoniae subsp. pneumoniae (strain ATCC 700721 / MGH 78578), this protein is UPF0761 membrane protein KPN78578_41360.